We begin with the raw amino-acid sequence, 526 residues long: Probable metalloreductase AIM14 (526 aa).

The next 7 membrane-spanning stretches (helical) occupy residues 17 to 37 (IPYG…LGVL), 60 to 80 (LYLV…LLPF), 96 to 113 (RLGR…LLNL), 138 to 158 (CIII…ALGE), 172 to 192 (LAGV…IGPM), 199 to 219 (AFYV…AFHA), and 221 to 241 (PSVT…QGFA). The 118-residue stretch at 97–214 (LGRLSYALLP…NLTGISFIFV (118 aa)) folds into the Ferric oxidoreductase domain. In terms of domain architecture, FAD-binding FR-type spans 238 to 370 (QGFAKFYYAK…GGSGISFGLP (133 aa)).

It belongs to the ferric reductase (FRE) family. AIM14 subfamily.

The protein localises to the membrane. Probable cell surface metalloreductase. May be involved in iron or copper homeostasis. This chain is Probable metalloreductase AIM14 (AIM14), found in Zygosaccharomyces rouxii (strain ATCC 2623 / CBS 732 / NBRC 1130 / NCYC 568 / NRRL Y-229).